The primary structure comprises 532 residues: MMMVRRGLLAWISRVVVLLVLLCCAISVLYMLACTPKGDEEQLALPRANSPTGKEGYQAVLQEWEEQHRNYVSSLKRQIAQLKEELQERSEQLRNGQYQASDAAGLGLDRSPPEKTQADLLAFLHSQVDKAEVNAGVKLATEYAAVPFDSFTLQKVYQLETGLTRHPEEKPVRKDKRDELVEAIESALETLNSPAENSPNHRPYTASDFIEGIYRTERDKGTLYELTFKGDHKHEFKRLILFRPFGPIMKVKNEKLNMANTLINVIVPLAKRVDKFRQFMQNFREMCIEQDGRVHLTVVYFGKEEINEVKGILENTSKAANFRNFTFIQLNGEFSRGKGLDVGARFWKGSNVLLFFCDVDIYFTSEFLNTCRLNTQPGKKVFYPVLFSQYNPGIIYGHHDAVPPLEQQLVIKKETGFWRDFGFGMTCQYRSDFINIGGFDLDIKGWGGEDVHLYRKYLHSNLIVVRTPVRGLFHLWHEKRCMDELTPEQYKMCMQSKAMNEASHGQLGMLVFRHEIEAHLRKQKQKTSSKKT.

Topologically, residues 1–14 are cytoplasmic; it reads MMMVRRGLLAWISR. Residues 15–35 form a helical; Signal-anchor for type II membrane protein membrane-spanning segment; sequence VVVLLVLLCCAISVLYMLACT. The Lumenal portion of the chain corresponds to 36–532; it reads PKGDEEQLAL…QKQKTSSKKT (497 aa). The stretch at 57 to 100 forms a coiled coil; the sequence is YQAVLQEWEEQHRNYVSSLKRQIAQLKEELQERSEQLRNGQYQA. 2 N-linked (GlcNAc...) asparagine glycosylation sites follow: asparagine 315 and asparagine 324. Residues aspartate 360 and histidine 477 each coordinate a divalent metal cation.

It belongs to the chondroitin N-acetylgalactosaminyltransferase family. Post-translationally, N-glycosylated. In terms of tissue distribution, ubiquitous, with the highest levels in placenta, thyroid, bladder, prostate and adrenal gland. Detected at low levels in the other tissues examined.

The protein resides in the golgi apparatus. It is found in the golgi stack membrane. The catalysed reaction is 3-O-(beta-D-GlcA-(1-&gt;3)-beta-D-Gal-(1-&gt;3)-beta-D-Gal-(1-&gt;4)-beta-D-Xyl)-L-seryl-[protein] + UDP-N-acetyl-alpha-D-galactosamine = 3-O-(beta-D-GalNAc-(1-&gt;4)-beta-D-GlcA-(1-&gt;3)-beta-D-Gal-(1-&gt;3)-beta-D-Gal-(1-&gt;4)-beta-D-Xyl)-L-seryl-[protein] + UDP + H(+). In terms of biological role, transfers 1,4-N-acetylgalactosamine (GalNAc) from UDP-GalNAc to the non-reducing end of glucuronic acid (GlcUA). Required for addition of the first GalNAc to the core tetrasaccharide linker and for elongation of chondroitin chains. Important role in chondroitin chain biosynthesis in cartilage formation and subsequent endochondral ossification. Moreover, is involved in the metabolism of aggrecan. In Homo sapiens (Human), this protein is Chondroitin sulfate N-acetylgalactosaminyltransferase 1.